Consider the following 232-residue polypeptide: Orotate phosphoribosyltransferase (232 aa).

5-phospho-alpha-D-ribose 1-diphosphate-binding positions include Arg-107, Lys-108, Lys-111, and 133–141; that span reads EDLTTDGGS. Thr-137 serves as a coordination point for orotate.

This sequence belongs to the purine/pyrimidine phosphoribosyltransferase family. PyrE subfamily. As to quaternary structure, homodimer. Mg(2+) serves as cofactor.

It carries out the reaction orotidine 5'-phosphate + diphosphate = orotate + 5-phospho-alpha-D-ribose 1-diphosphate. It functions in the pathway pyrimidine metabolism; UMP biosynthesis via de novo pathway; UMP from orotate: step 1/2. In terms of biological role, catalyzes the transfer of a ribosyl phosphate group from 5-phosphoribose 1-diphosphate to orotate, leading to the formation of orotidine monophosphate (OMP). The sequence is that of Orotate phosphoribosyltransferase from Cereibacter sphaeroides (strain ATCC 17023 / DSM 158 / JCM 6121 / CCUG 31486 / LMG 2827 / NBRC 12203 / NCIMB 8253 / ATH 2.4.1.) (Rhodobacter sphaeroides).